The sequence spans 79 residues: EAMZP30-47 protein (79 aa).

Over residues 1 to 12 (HAASPRGRPQQR) the composition is skewed to low complexity. Positions 1–47 (HAASPRGRPQQRSSRHGAEGPDTTRRGSCCSSSSSCCRPSTPRHPHN) are disordered. Over residues 16-25 (HGAEGPDTTR) the composition is skewed to basic and acidic residues. The segment covering 28 to 37 (SCCSSSSSCC) has biased composition (low complexity).

It is found in the membrane. Its subcellular location is the cell membrane. The protein localises to the cytoplasmic vesicle. The protein resides in the secretory vesicle. It localises to the rhoptry. This is EAMZP30-47 protein (CMC17) from Eimeria acervulina (Coccidian parasite).